Consider the following 137-residue polypeptide: Large-conductance mechanosensitive channel (137 aa).

Helical transmembrane passes span 10 to 30 (FAMR…AAFG) and 76 to 96 (GVFI…FMAI).

The protein belongs to the MscL family. Homopentamer.

Its subcellular location is the cell inner membrane. In terms of biological role, channel that opens in response to stretch forces in the membrane lipid bilayer. May participate in the regulation of osmotic pressure changes within the cell. The protein is Large-conductance mechanosensitive channel of Escherichia coli O45:K1 (strain S88 / ExPEC).